A 129-amino-acid chain; its full sequence is uncharacterized protein (129 aa).

A compositionally biased stretch (basic residues) spans 84–98; the sequence is QKTVSKKYKSRKGRR. A disordered region spans residues 84-129; it reads QKTVSKKYKSRKGRRYTRERNISSEKNKTDKSHKVRVGKIQNINND. Basic and acidic residues predominate over residues 99–115; sequence YTRERNISSEKNKTDKS.

This is an uncharacterized protein from Acanthamoeba polyphaga mimivirus (APMV).